Reading from the N-terminus, the 514-residue chain is 2-isopropylmalate synthase (514 aa).

The Pyruvate carboxyltransferase domain occupies 5-268 (LIIFDTTLRD…DVGIDTTQIV (264 aa)). 4 residues coordinate Mn(2+): Asp14, His202, His204, and Asn239. The regulatory domain stretch occupies residues 395–514 (KFVSLSQHSE…KDDKLNPQRA (120 aa)).

It belongs to the alpha-IPM synthase/homocitrate synthase family. LeuA type 1 subfamily. As to quaternary structure, homodimer. Requires Mn(2+) as cofactor.

Its subcellular location is the cytoplasm. It carries out the reaction 3-methyl-2-oxobutanoate + acetyl-CoA + H2O = (2S)-2-isopropylmalate + CoA + H(+). It participates in amino-acid biosynthesis; L-leucine biosynthesis; L-leucine from 3-methyl-2-oxobutanoate: step 1/4. Functionally, catalyzes the condensation of the acetyl group of acetyl-CoA with 3-methyl-2-oxobutanoate (2-ketoisovalerate) to form 3-carboxy-3-hydroxy-4-methylpentanoate (2-isopropylmalate). The polypeptide is 2-isopropylmalate synthase (Burkholderia vietnamiensis (strain G4 / LMG 22486) (Burkholderia cepacia (strain R1808))).